Here is a 537-residue protein sequence, read N- to C-terminus: Phenylalanine--tRNA ligase beta subunit (537 aa).

In terms of domain architecture, B5 spans 268–343; the sequence is FNFRPYRLNL…KSYGIENVRE (76 aa). Mg(2+) is bound by residues aspartate 321, aspartate 327, glutamate 330, and aspartate 331.

This sequence belongs to the phenylalanyl-tRNA synthetase beta subunit family. Type 2 subfamily. As to quaternary structure, tetramer of two alpha and two beta subunits. The cofactor is Mg(2+).

The protein resides in the cytoplasm. It carries out the reaction tRNA(Phe) + L-phenylalanine + ATP = L-phenylalanyl-tRNA(Phe) + AMP + diphosphate + H(+). The protein is Phenylalanine--tRNA ligase beta subunit of Thermoplasma volcanium (strain ATCC 51530 / DSM 4299 / JCM 9571 / NBRC 15438 / GSS1).